A 281-amino-acid polypeptide reads, in one-letter code: NADPH-dependent 7-cyano-7-deazaguanine reductase (281 aa).

87–89 (IES) is a binding site for substrate. Position 89–90 (89–90 (SK)) interacts with NADPH. Catalysis depends on Cys-188, which acts as the Thioimide intermediate. The Proton donor role is filled by Asp-195. Position 227–228 (227–228 (HE)) interacts with substrate. Position 256 to 257 (256 to 257 (RG)) interacts with NADPH. Positions 261 to 281 (INPYRSTEQAKPDHNHRMARQ) are disordered. Positions 268–281 (EQAKPDHNHRMARQ) are enriched in basic and acidic residues.

It belongs to the GTP cyclohydrolase I family. QueF type 2 subfamily. Homodimer.

It localises to the cytoplasm. It catalyses the reaction 7-aminomethyl-7-carbaguanine + 2 NADP(+) = 7-cyano-7-deazaguanine + 2 NADPH + 3 H(+). It participates in tRNA modification; tRNA-queuosine biosynthesis. Functionally, catalyzes the NADPH-dependent reduction of 7-cyano-7-deazaguanine (preQ0) to 7-aminomethyl-7-deazaguanine (preQ1). This chain is NADPH-dependent 7-cyano-7-deazaguanine reductase, found in Vibrio vulnificus (strain CMCP6).